The chain runs to 434 residues: MDYLDLGPYSSASGTVRLPGSKSISNRVLLLAALAEGETTITNLLDSDDTRVMLDALGTLGVKLARDGDTCVVTGTRGAFTAKTADLFLGNAGTAVRPLTAALAVNGGDYRVHGVPRMHERPIGDLVDGLRQIGAQIDYELNEGYPPLRIKPANISVDAPIRVRGDVSSQFLTALLMTLPLVKAKDGKIVVEVDGELISKPYIDITIRLMERFGVTVERDGWQRFVVPAGVRYRSPGRIMVEGDASSASYFLAAGALGGGPLRVEGVGRASIQGDVGFANALMQMGANVTMGDDWIDVRGIGHDHGKLEPIDMDFNLIPDAAMTIAVAALFANGTSTLRNIASWRVKETDRIAAMATELRKVGAIIEEGPDYLVVTPPEKLTPNAAIDTYDDHRMAMCFSLVSLGGVPVRINDPKCVGKTFPDYFDRFAALAKA.

Residues Lys-22, Ser-23, and Arg-27 each coordinate 3-phosphoshikimate. Lys-22 lines the phosphoenolpyruvate pocket. Phosphoenolpyruvate contacts are provided by Gly-93 and Arg-121. 6 residues coordinate 3-phosphoshikimate: Ser-168, Ser-169, Gln-170, Ser-199, Asp-320, and Lys-347. Gln-170 lines the phosphoenolpyruvate pocket. Catalysis depends on Asp-320, which acts as the Proton acceptor. Residues Arg-351, Arg-394, and Lys-419 each coordinate phosphoenolpyruvate.

It belongs to the EPSP synthase family. As to quaternary structure, monomer.

The protein localises to the cytoplasm. It catalyses the reaction 3-phosphoshikimate + phosphoenolpyruvate = 5-O-(1-carboxyvinyl)-3-phosphoshikimate + phosphate. Its pathway is metabolic intermediate biosynthesis; chorismate biosynthesis; chorismate from D-erythrose 4-phosphate and phosphoenolpyruvate: step 6/7. Functionally, catalyzes the transfer of the enolpyruvyl moiety of phosphoenolpyruvate (PEP) to the 5-hydroxyl of shikimate-3-phosphate (S3P) to produce enolpyruvyl shikimate-3-phosphate and inorganic phosphate. The polypeptide is 3-phosphoshikimate 1-carboxyvinyltransferase (Burkholderia lata (strain ATCC 17760 / DSM 23089 / LMG 22485 / NCIMB 9086 / R18194 / 383)).